Consider the following 245-residue polypeptide: Phosphoribosylaminoimidazole-succinocarboxamide synthase (245 aa).

This sequence belongs to the SAICAR synthetase family.

The catalysed reaction is 5-amino-1-(5-phospho-D-ribosyl)imidazole-4-carboxylate + L-aspartate + ATP = (2S)-2-[5-amino-1-(5-phospho-beta-D-ribosyl)imidazole-4-carboxamido]succinate + ADP + phosphate + 2 H(+). The protein operates within purine metabolism; IMP biosynthesis via de novo pathway; 5-amino-1-(5-phospho-D-ribosyl)imidazole-4-carboxamide from 5-amino-1-(5-phospho-D-ribosyl)imidazole-4-carboxylate: step 1/2. This chain is Phosphoribosylaminoimidazole-succinocarboxamide synthase, found in Nostoc punctiforme (strain ATCC 29133 / PCC 73102).